We begin with the raw amino-acid sequence, 150 residues long: Large ribosomal subunit protein uL15 (150 aa).

Residues 1-15 (MNLSNLQPAEGSTHN) are compositionally biased toward polar residues. The disordered stretch occupies residues 1–53 (MNLSNLQPAEGSTHNQNKRVGRGEGSGKGGTAARGHKGAKSRSGYSKKIGFEG). Residues 23–32 (GEGSGKGGTA) are compositionally biased toward gly residues.

It belongs to the universal ribosomal protein uL15 family. As to quaternary structure, part of the 50S ribosomal subunit.

Its function is as follows. Binds to the 23S rRNA. This is Large ribosomal subunit protein uL15 from Flavobacterium johnsoniae (strain ATCC 17061 / DSM 2064 / JCM 8514 / BCRC 14874 / CCUG 350202 / NBRC 14942 / NCIMB 11054 / UW101) (Cytophaga johnsonae).